A 221-amino-acid polypeptide reads, in one-letter code: Translation initiation factor 6 (221 aa).

It belongs to the eIF-6 family.

In terms of biological role, binds to the 50S ribosomal subunit and prevents its association with the 30S ribosomal subunit to form the 70S initiation complex. This Nitrosopumilus maritimus (strain SCM1) protein is Translation initiation factor 6.